Reading from the N-terminus, the 229-residue chain is uncharacterized protein (229 aa).

The next 7 helical transmembrane spans lie at 21-41 (IYSLVGMGVGLSAFVSYLMLY), 56-76 (MIYYGAAIIELILVFVASSAA), 83-103 (ALPIFLIYSALNGFTLSFIIV), 109-129 (TVFQAFLSSAAVFFAMSIIGV), 141-161 (AMFAALIGVVVASLINLFIGS), 162-182 (GMMSYVISVISVLIFSGLIAS), and 202-222 (WAVAMALSLYLDFINLFISLL).

It belongs to the BI1 family.

It localises to the cell membrane. This is an uncharacterized protein from Streptococcus pyogenes serotype M1.